The chain runs to 196 residues: Holliday junction branch migration complex subunit RuvA (196 aa).

The interval 1-65 (MIGYLRGKII…EDALQLFGFH (65 aa)) is domain I. The tract at residues 66-140 (DKEEKNLFLS…GKLVSIEEGG (75 aa)) is domain II. The interval 140–144 (GVVAK) is flexible linker. The segment at 145–196 (AKSVAHTQITSALLNLGYKSQLVDQFVSSLPADIAVEDGIRKGFQTLSGGLS) is domain III.

Belongs to the RuvA family. As to quaternary structure, homotetramer. Forms an RuvA(8)-RuvB(12)-Holliday junction (HJ) complex. HJ DNA is sandwiched between 2 RuvA tetramers; dsDNA enters through RuvA and exits via RuvB. An RuvB hexamer assembles on each DNA strand where it exits the tetramer. Each RuvB hexamer is contacted by two RuvA subunits (via domain III) on 2 adjacent RuvB subunits; this complex drives branch migration. In the full resolvosome a probable DNA-RuvA(4)-RuvB(12)-RuvC(2) complex forms which resolves the HJ.

The protein resides in the cytoplasm. In terms of biological role, the RuvA-RuvB-RuvC complex processes Holliday junction (HJ) DNA during genetic recombination and DNA repair, while the RuvA-RuvB complex plays an important role in the rescue of blocked DNA replication forks via replication fork reversal (RFR). RuvA specifically binds to HJ cruciform DNA, conferring on it an open structure. The RuvB hexamer acts as an ATP-dependent pump, pulling dsDNA into and through the RuvAB complex. HJ branch migration allows RuvC to scan DNA until it finds its consensus sequence, where it cleaves and resolves the cruciform DNA. The sequence is that of Holliday junction branch migration complex subunit RuvA from Bdellovibrio bacteriovorus (strain ATCC 15356 / DSM 50701 / NCIMB 9529 / HD100).